The following is a 530-amino-acid chain: MKFNDVTRGTGLEEHGITNANLIYWTPPTSVLYEQIIKRGEGLVSHMGALAVKTGHYTGRAANEKFIVDEPTCHENVAWGKVNKPFDPQKFDELYKRMLAYMDGRNLFVQDCFAGADREHRLPLRIITERAWHSLFARNMFIRATPEELEQHEPRFALINLPGFHAIPSIDGTHSEAFIIVNLGRKLILIGGTSYAGEIKKSIFTILNYILPVEKKILSMHCSANVGPKGDSAVFFGLSGTGKTTLSADSSRALIGDDEHGWDDKGLFNFEGGCYAKIIRLCPESEPEIFATTRRFGTILENVAINTRTRRVDLDDDSFTENTRASYPLTHIPNIVPSGIAGHPANIIMLTCDAYGVLPPISHLTKEQAMYHFLSGYTARVAGTEAGVKEPTATFSTCFGGPFMALNPTVYGELLREKISRHNVSCWLVNTGWNGGPYGVGERIRISYSRALINAALDGTLADGSFETDPFFGLAIPTSCPGVPSEMLNPRNTWSDPARYDDTASRLVAMFRSNFTKYQPYVSAEVANAL.

Residues R60, Y195, and K201 each contribute to the substrate site. Residues K201, H221, and 237-245 (GLSGTGKTT) contribute to the ATP site. 2 residues coordinate Mn(2+): K201 and H221. D258 is a Mn(2+) binding site. Residues E286, R324, 443–444 (RI), and S449 contribute to the ATP site. R324 is a substrate binding site.

It belongs to the phosphoenolpyruvate carboxykinase (ATP) family. The cofactor is Mn(2+).

The protein resides in the cytoplasm. The catalysed reaction is oxaloacetate + ATP = phosphoenolpyruvate + ADP + CO2. It participates in carbohydrate biosynthesis; gluconeogenesis. Its function is as follows. Involved in the gluconeogenesis. Catalyzes the conversion of oxaloacetate (OAA) to phosphoenolpyruvate (PEP) through direct phosphoryl transfer between the nucleoside triphosphate and OAA. This is Phosphoenolpyruvate carboxykinase (ATP) from Pelobacter propionicus (strain DSM 2379 / NBRC 103807 / OttBd1).